The primary structure comprises 392 residues: Dual-specificity RNA methyltransferase RlmN (392 aa).

The active-site Proton acceptor is the glutamate 116. A Radical SAM core domain is found at 122 to 364 (EEGRGTLCVS…SPIRTPRGED (243 aa)). Cysteines 129 and 369 form a disulfide. [4Fe-4S] cluster is bound by residues cysteine 136, cysteine 140, and cysteine 143. S-adenosyl-L-methionine-binding positions include 195–196 (GE), serine 227, 249–251 (SFH), and asparagine 326. Catalysis depends on cysteine 369, which acts as the S-methylcysteine intermediate.

It belongs to the radical SAM superfamily. RlmN family. The cofactor is [4Fe-4S] cluster.

It is found in the cytoplasm. It carries out the reaction adenosine(2503) in 23S rRNA + 2 reduced [2Fe-2S]-[ferredoxin] + 2 S-adenosyl-L-methionine = 2-methyladenosine(2503) in 23S rRNA + 5'-deoxyadenosine + L-methionine + 2 oxidized [2Fe-2S]-[ferredoxin] + S-adenosyl-L-homocysteine. The catalysed reaction is adenosine(37) in tRNA + 2 reduced [2Fe-2S]-[ferredoxin] + 2 S-adenosyl-L-methionine = 2-methyladenosine(37) in tRNA + 5'-deoxyadenosine + L-methionine + 2 oxidized [2Fe-2S]-[ferredoxin] + S-adenosyl-L-homocysteine. In terms of biological role, specifically methylates position 2 of adenine 2503 in 23S rRNA and position 2 of adenine 37 in tRNAs. m2A2503 modification seems to play a crucial role in the proofreading step occurring at the peptidyl transferase center and thus would serve to optimize ribosomal fidelity. This chain is Dual-specificity RNA methyltransferase RlmN, found in Cereibacter sphaeroides (strain ATCC 17025 / ATH 2.4.3) (Rhodobacter sphaeroides).